The primary structure comprises 874 residues: Alanine--tRNA ligase (874 aa).

Positions 561, 565, 663, and 667 each coordinate Zn(2+).

It belongs to the class-II aminoacyl-tRNA synthetase family. It depends on Zn(2+) as a cofactor.

It localises to the cytoplasm. The catalysed reaction is tRNA(Ala) + L-alanine + ATP = L-alanyl-tRNA(Ala) + AMP + diphosphate. Functionally, catalyzes the attachment of alanine to tRNA(Ala) in a two-step reaction: alanine is first activated by ATP to form Ala-AMP and then transferred to the acceptor end of tRNA(Ala). Also edits incorrectly charged Ser-tRNA(Ala) and Gly-tRNA(Ala) via its editing domain. The protein is Alanine--tRNA ligase of Trichodesmium erythraeum (strain IMS101).